The primary structure comprises 361 residues: tRNA-specific 2-thiouridylase MnmA (361 aa).

ATP is bound by residues 6 to 13 and Ile32; that span reads LVSGGVDS. The segment at 93–95 is interaction with target base in tRNA; sequence NPD. Cys98 serves as the catalytic Nucleophile. Cys98 and Cys193 are oxidised to a cystine. Residue Gly121 coordinates ATP. The tract at residues 143 to 145 is interaction with tRNA; sequence KDQ. Cys193 functions as the Cysteine persulfide intermediate in the catalytic mechanism.

Belongs to the MnmA/TRMU family.

It localises to the cytoplasm. The catalysed reaction is S-sulfanyl-L-cysteinyl-[protein] + uridine(34) in tRNA + AH2 + ATP = 2-thiouridine(34) in tRNA + L-cysteinyl-[protein] + A + AMP + diphosphate + H(+). Functionally, catalyzes the 2-thiolation of uridine at the wobble position (U34) of tRNA, leading to the formation of s(2)U34. This chain is tRNA-specific 2-thiouridylase MnmA, found in Porphyromonas gingivalis (strain ATCC 33277 / DSM 20709 / CIP 103683 / JCM 12257 / NCTC 11834 / 2561).